The following is a 509-amino-acid chain: Putative cytochrome P450 CYP13A8 (509 aa).

Cys455 provides a ligand contact to heme.

It belongs to the cytochrome P450 family. Requires heme as cofactor.

Cytochromes P450 are a group of heme-thiolate monooxygenases. They oxidize a variety of structurally unrelated compounds, including steroids, fatty acids, and xenobiotics. This Caenorhabditis elegans protein is Putative cytochrome P450 CYP13A8 (cyp-13A8).